Consider the following 403-residue polypeptide: Homoserine O-succinyltransferase (403 aa).

Residues 1-31 are disordered; the sequence is MTELQVDPAASADPAAAADTPRHPAATLPPD. The segment covering 7 to 26 has biased composition (low complexity); the sequence is DPAASADPAAAADTPRHPAA. Positions 74 to 383 constitute an AB hydrolase-1 domain; it reads NAVLICHALN…HGHDAFLLED (310 aa). The Nucleophile role is filled by S178. R248 is a substrate binding site. Residues D343 and H376 contribute to the active site. D377 serves as a coordination point for substrate.

This sequence belongs to the AB hydrolase superfamily. MetX family. In terms of assembly, homodimer.

Its subcellular location is the cytoplasm. It carries out the reaction L-homoserine + succinyl-CoA = O-succinyl-L-homoserine + CoA. It participates in amino-acid biosynthesis; L-methionine biosynthesis via de novo pathway; O-succinyl-L-homoserine from L-homoserine: step 1/1. Functionally, transfers a succinyl group from succinyl-CoA to L-homoserine, forming succinyl-L-homoserine. This is Homoserine O-succinyltransferase from Ralstonia nicotianae (strain ATCC BAA-1114 / GMI1000) (Ralstonia solanacearum).